A 380-amino-acid chain; its full sequence is 1-deoxy-D-xylulose 5-phosphate reductoisomerase (380 aa).

NADPH-binding residues include threonine 10, glycine 11, serine 12, isoleucine 13, glycine 35, arginine 36, asparagine 37, and asparagine 121. Lysine 122 is a 1-deoxy-D-xylulose 5-phosphate binding site. Glutamate 123 provides a ligand contact to NADPH. Mn(2+) is bound at residue aspartate 147. 1-deoxy-D-xylulose 5-phosphate contacts are provided by serine 148, glutamate 149, serine 173, and histidine 196. Position 149 (glutamate 149) interacts with Mn(2+). Glycine 202 lines the NADPH pocket. Serine 209, asparagine 214, lysine 215, and glutamate 218 together coordinate 1-deoxy-D-xylulose 5-phosphate. Glutamate 218 is a Mn(2+) binding site.

It belongs to the DXR family. It depends on Mg(2+) as a cofactor. Mn(2+) serves as cofactor.

It carries out the reaction 2-C-methyl-D-erythritol 4-phosphate + NADP(+) = 1-deoxy-D-xylulose 5-phosphate + NADPH + H(+). Its pathway is isoprenoid biosynthesis; isopentenyl diphosphate biosynthesis via DXP pathway; isopentenyl diphosphate from 1-deoxy-D-xylulose 5-phosphate: step 1/6. Catalyzes the NADPH-dependent rearrangement and reduction of 1-deoxy-D-xylulose-5-phosphate (DXP) to 2-C-methyl-D-erythritol 4-phosphate (MEP). This chain is 1-deoxy-D-xylulose 5-phosphate reductoisomerase, found in Agathobacter rectalis (strain ATCC 33656 / DSM 3377 / JCM 17463 / KCTC 5835 / VPI 0990) (Eubacterium rectale).